The primary structure comprises 1586 residues: MRNNWNWLIFLVPFILSLTTAYTPDISVVKNKSPAREIKYFDDSSNLLVLRDEHLLISKNDGKSFEEIPDIKDPIIYFEMDPTNKNRAFAMTLSQKQYITEDQGNKWRTFEIDIFNGEMASIPKITFNFENPNYLMISNYECPEGQRLNRNCKHRYFFTKDGFKSKPNKLPVDAHVCRFAKSTKTSKIGKSETIFCTVNQLNSYGHIVESHLYNSNDFFQNKNEIKIKPLDSSSGEIIDVKIEEDFMIVVSRMDKFNEKSLINAYVSRDGENFVRADLDIDIKYGVMSFLPSSVSSLFLTIMDFNSRAFQTASFYGSDSSGLHFTKLLDNVAGGNIQKIENIDGAWIANIGVDSNNPYDGDESLLDNLFGGTYAKSIVSKVSINDGKDWSLIKLNDNSCKIEDECSLHLWDFTELDGEGKFVTGPTPGILLGVGNKGKNLAHEFEKMKTYVSRDGGVTWNKALDFPAVFAFGDQGNVILAVPYNGKKKYEAAKHFYFSLDQGKSWEKVDLEHPIYPLSILTTIDGTSRKFIIGGIDDSRRAENEYIYSVDFTNAFDGKTCGDDDFEEFVARKSNDNGNDEPLCVYGHREKFRRRKQDAKCFVNKLFEDIKVIEDPCQCTEHDFECGPGFRLSEKESTNVCVPDRKQLTQLCQSKSEITLPNKVLVEGNKCNMGDKKLEDFVSQETLKCSDYVDNGGDGNGDEKNPNQGDSNQIEVHINDFEGKLSQYQYIAESKDNNAADNVVIKTMDDRLWISNNGGVSFVRVPISDKILGFYAGPIPGQITLITATNIIYVSDDGGATFIKRKVPTQPSPRVDRAIAFHSKNVERFIWFGEECESNGRCTSNAYITDDAGATFNKLMANVRTCDYVGAVLESGDHELIYCSGQNSLDNNNNNNKNKNKLALFSLKESSSEEPKKIFENIVGYAITGTYVVVATIDDKTDSLLSKVTVDGDIFADADFPHDLKVEPHQAFTVLDSSSKAVFMHVTTNEKPNFEYGQLLKSNSNGTYFVLTLDNVNRNTVGYVDFDKIDGLEGTIIANVVANAQANEGTKNLQTLISHNDGSEWDKLVPPTIDSEGIKYPCTGQSLNKCALHLHGFTERADYRDTFSSGSATGFLIGVGNVGEFLTPMDDPSTATFLSTDGGVTWKEIKKGVYMWEYGDQGTILVLVNAVENTDVLYYSLDEGQTWKEYKFSEYKVNIYDLATVPTDTARKFIIFAENPKDHRDIQTFTIDFTNIYPRQCQLNLDDPEHDDYEYWSPTHPIGGDKCIFGHESKYLRRAKGHTDCFIGSAPLSEGYKLEKNCSCTRRDYECDYNYVRDVNDNTCKLVKGMTSADRKTTMCSKENAFQYFESTGYRKIPLSTCKGGQQFDNWNPKPCPGKEKQFNEYYGREVKGHKLFFLIFIPLIIFLATVLFVYDRGIRRNGGFKRLGQIRLNDDDDDFNPIENDQIDVVVNKIVKGGVYTVAVLIATVKTIRKIDRMMLEKLGNVIFRRSPGRRNYVSVPNDLDEEEELFGDYQDNLDDELEDAVFNQDDNLVRTPFADDVEEEEEEREGEGEGEQSNPSDERLFDIDDNEDEDEQHEVNKPTTS.

A signal peptide spans 1–21 (MRNNWNWLIFLVPFILSLTTA). Residues 22 to 1394 (YTPDISVVKN…YYGREVKGHK (1373 aa)) are Lumenal-facing. BNR repeat units lie at residues 450–460 (YVSRDGGVTWN) and 496–507 (YFSLDQGKSWEK). Positions 692-711 (VDNGGDGNGDEKNPNQGDSN) are disordered. 2 BNR repeats span residues 792–801 (YVSDDGGATF) and 846–856 (YITDDAGATFN). N1004 carries N-linked (GlcNAc...) asparagine glycosylation. BNR repeat units follow at residues 1136–1146 (FLSTDGGVTWK) and 1177–1187 (YYSLDEGQTWK). N-linked (GlcNAc...) asparagine glycosylation is present at N1300. A helical membrane pass occupies residues 1395 to 1415 (LFFLIFIPLIIFLATVLFVYD). The Cytoplasmic segment spans residues 1416–1586 (RGIRRNGGFK…QHEVNKPTTS (171 aa)). A disordered region spans residues 1527–1586 (FNQDDNLVRTPFADDVEEEEEEREGEGEGEQSNPSDERLFDIDDNEDEDEQHEVNKPTTS). Acidic residues-rich tracts occupy residues 1540 to 1555 (DDVE…EGEG) and 1568 to 1577 (IDDNEDEDEQ).

Belongs to the VPS10-related sortilin family.

Its subcellular location is the golgi apparatus. It is found in the trans-Golgi network membrane. The protein localises to the prevacuolar compartment membrane. Functionally, functions as a sorting receptor in the Golgi compartment required for the intracellular sorting and delivery of soluble vacuolar proteins, like carboxypeptidase Y (CPY) and proteinase A. Executes multiple rounds of sorting by cycling between the late Golgi and a prevacuolar endosome-like compartment. The chain is Vacuolar protein sorting/targeting protein 10 (VPS10) from Candida albicans (strain WO-1) (Yeast).